Here is a 130-residue protein sequence, read N- to C-terminus: Small ribosomal subunit protein uS8 (130 aa).

This sequence belongs to the universal ribosomal protein uS8 family. As to quaternary structure, part of the 30S ribosomal subunit. Contacts proteins S5 and S12.

One of the primary rRNA binding proteins, it binds directly to 16S rRNA central domain where it helps coordinate assembly of the platform of the 30S subunit. This Pseudomonas fluorescens (strain Pf0-1) protein is Small ribosomal subunit protein uS8.